The primary structure comprises 424 residues: Histidine--tRNA ligase (424 aa).

Belongs to the class-II aminoacyl-tRNA synthetase family. Homodimer.

It is found in the cytoplasm. The catalysed reaction is tRNA(His) + L-histidine + ATP = L-histidyl-tRNA(His) + AMP + diphosphate + H(+). In Protochlamydia amoebophila (strain UWE25), this protein is Histidine--tRNA ligase.